A 318-amino-acid polypeptide reads, in one-letter code: tRNA uridine(34) hydroxylase (318 aa).

The 95-residue stretch at 123 to 217 (EDDDTVIIDA…YGKDPETKGE (95 aa)) folds into the Rhodanese domain. Residue Cys-177 is the Cysteine persulfide intermediate of the active site.

Belongs to the TrhO family.

The enzyme catalyses uridine(34) in tRNA + AH2 + O2 = 5-hydroxyuridine(34) in tRNA + A + H2O. Functionally, catalyzes oxygen-dependent 5-hydroxyuridine (ho5U) modification at position 34 in tRNAs. The chain is tRNA uridine(34) hydroxylase from Staphylococcus aureus (strain USA300).